The following is a 794-amino-acid chain: Protein argonaute-4 (794 aa).

The PAZ domain occupies 152 to 271 (PIIEFMCEVL…LPLEVCNIVA (120 aa)). The region spanning 442-753 (LIVVILPGKT…VAFRARYHLV (312 aa)) is the Piwi domain. The interval 758–779 (DSAEGSHVSGQSNGRDPQALAK) is disordered.

It belongs to the argonaute family. Ago subfamily.

The protein resides in the cytoplasm. It is found in the P-body. In terms of biological role, required for RNA-mediated gene silencing (RNAi). Binds to short RNAs such as microRNAs (miRNAs) and represses the translation of mRNAs which are complementary to them. Lacks endonuclease activity and does not appear to cleave target mRNAs. This Gallus gallus (Chicken) protein is Protein argonaute-4 (AGO4).